We begin with the raw amino-acid sequence, 481 residues long: OTU domain-containing protein 1 (481 aa).

Disordered regions lie at residues 18–60 and 202–282; these read PTAA…AAAE and LAAA…IVSR. Positions 38–58 are enriched in low complexity; that stretch reads PPGAAGAAPEPETGECQPAAA. Positions 225–257 are enriched in basic and acidic residues; the sequence is GEEHLAERGPRGWERGGDRCDAPGGDAARRPDP. The segment covering 261 to 281 has biased composition (low complexity); it reads APPAGSIEAAPSSAAEPVIVS. Residues 309–438 enclose the OTU domain; sequence KYRFHIIPDG…NGHYDAVFDH (130 aa). Residues 314–320 form a cys-loop region; that stretch reads IIPDGNC. Asp317 is a catalytic residue. Residue Cys320 is the Nucleophile of the active site. Residues 369–379 form a his-loop region; the sequence is AAQDGAWAGYP. The interval 426 to 431 is variable-loop; it reads WLSNGH. Residue His431 is part of the active site. Residues 457 to 476 enclose the UIM domain; it reads KRDEELAKSMAISLSKMYIE.

The enzyme catalyses Thiol-dependent hydrolysis of ester, thioester, amide, peptide and isopeptide bonds formed by the C-terminal Gly of ubiquitin (a 76-residue protein attached to proteins as an intracellular targeting signal).. Functionally, deubiquitinating enzyme that specifically hydrolyzes 'Lys-63'-linked polyubiquitin to monoubiquitin. Required for the stability and translation of a subset mRNAs with a high abundance of rare codons by mediating deubiquitination of 40S ribosomal protein RPS10/eS10, thereby antagonizing ZNF598-mediated 40S ubiquitination. The abundance of rare codons in mRNAs can limit the translation rate and can lead to ribosome collisions that trigger activation of ribosome quality control (RQC) pathway by ZNF598. OTUD1-mediated deubiquitination prevents activation of the RQC and subsequent dissociation of ribosomes and stimulates formation of polysomes and translation. In Homo sapiens (Human), this protein is OTU domain-containing protein 1.